Reading from the N-terminus, the 281-residue chain is Diaminopimelate epimerase (281 aa).

Positions 13 and 66 each coordinate substrate. Cys75 functions as the Proton donor in the catalytic mechanism. Residues Gly76 to Asn77, Asn164, Asn197, and Glu215 to Arg216 contribute to the substrate site. The Proton acceptor role is filled by Cys224. Residue Gly225 to Thr226 participates in substrate binding.

The protein belongs to the diaminopimelate epimerase family. In terms of assembly, homodimer.

The protein localises to the cytoplasm. It carries out the reaction (2S,6S)-2,6-diaminopimelate = meso-2,6-diaminopimelate. It functions in the pathway amino-acid biosynthesis; L-lysine biosynthesis via DAP pathway; DL-2,6-diaminopimelate from LL-2,6-diaminopimelate: step 1/1. Catalyzes the stereoinversion of LL-2,6-diaminopimelate (L,L-DAP) to meso-diaminopimelate (meso-DAP), a precursor of L-lysine and an essential component of the bacterial peptidoglycan. The chain is Diaminopimelate epimerase from Rippkaea orientalis (strain PCC 8801 / RF-1) (Cyanothece sp. (strain PCC 8801)).